Reading from the N-terminus, the 146-residue chain is Catabolic 3-dehydroquinase (146 aa).

Catalysis depends on Tyr24, which acts as the Proton acceptor. Asn78, His84, and Asp91 together coordinate substrate. Catalysis depends on His104, which acts as the Proton donor. Substrate contacts are provided by residues 105–106 (IT) and Arg115.

It belongs to the type-II 3-dehydroquinase family. In terms of assembly, homododecamer. Adopts a ring-like structure, composed of an arrangement of two hexameric rings stacked on top of one another.

It catalyses the reaction 3-dehydroquinate = 3-dehydroshikimate + H2O. It participates in aromatic compound metabolism; 3,4-dihydroxybenzoate biosynthesis; 3,4-dihydroxybenzoate from 3-dehydroquinate: step 1/2. In terms of biological role, is involved in the catabolism of quinate. Allows the utilization of quinate as carbon source via the beta-ketoadipate pathway. The polypeptide is Catabolic 3-dehydroquinase (Scheffersomyces stipitis (strain ATCC 58785 / CBS 6054 / NBRC 10063 / NRRL Y-11545) (Yeast)).